The chain runs to 503 residues: Maturase K (503 aa).

This sequence belongs to the intron maturase 2 family. MatK subfamily.

The protein resides in the plastid. It localises to the chloroplast. Functionally, usually encoded in the trnK tRNA gene intron. Probably assists in splicing its own and other chloroplast group II introns. This Syzygium australe (Brush cherry) protein is Maturase K.